Reading from the N-terminus, the 239-residue chain is Ribosomal RNA small subunit methyltransferase G (239 aa).

Residues Gly77, Phe82, 128 to 129, and Arg146 each bind S-adenosyl-L-methionine; that span reads AE. A disordered region spans residues 216 to 239; the sequence is KRRQTSKKYPRKPGTPNKSPLVES.

The protein belongs to the methyltransferase superfamily. RNA methyltransferase RsmG family.

The protein resides in the cytoplasm. Functionally, specifically methylates the N7 position of guanine in position 535 of 16S rRNA. The sequence is that of Ribosomal RNA small subunit methyltransferase G from Staphylococcus epidermidis (strain ATCC 35984 / DSM 28319 / BCRC 17069 / CCUG 31568 / BM 3577 / RP62A).